Reading from the N-terminus, the 152-residue chain is FAD synthase (152 aa).

Residues 9–10 (TF), 14–17 (HPGH), and aspartate 92 each bind ATP.

This sequence belongs to the archaeal FAD synthase family. Homodimer. The cofactor is a divalent metal cation.

The enzyme catalyses FMN + ATP + H(+) = FAD + diphosphate. Its pathway is cofactor biosynthesis; FAD biosynthesis; FAD from FMN: step 1/1. In terms of biological role, catalyzes the transfer of the AMP portion of ATP to flavin mononucleotide (FMN) to produce flavin adenine dinucleotide (FAD) coenzyme. This chain is FAD synthase, found in Ferroglobus placidus (strain DSM 10642 / AEDII12DO).